Consider the following 154-residue polypeptide: Superoxide dismutase [Cu-Zn] (154 aa).

The Cu cation site is built by His-47, His-49, and His-64. A disulfide bridge connects residues Cys-58 and Cys-147. Residues His-64, His-72, His-81, and Asp-84 each contribute to the Zn(2+) site. A Cu cation-binding site is contributed by His-121. Residue Arg-144 coordinates substrate.

This sequence belongs to the Cu-Zn superoxide dismutase family. In terms of assembly, homodimer. Requires Cu cation as cofactor. Zn(2+) is required as a cofactor.

Its subcellular location is the cytoplasm. It carries out the reaction 2 superoxide + 2 H(+) = H2O2 + O2. Functionally, destroys radicals which are normally produced within the cells and which are toxic to biological systems. The sequence is that of Superoxide dismutase [Cu-Zn] (SOD1) from Eremothecium gossypii (strain ATCC 10895 / CBS 109.51 / FGSC 9923 / NRRL Y-1056) (Yeast).